Consider the following 198-residue polypeptide: Elongation factor Ts (198 aa).

The interval 81 to 84 (TDFV) is involved in Mg(2+) ion dislocation from EF-Tu.

Belongs to the EF-Ts family.

The protein resides in the cytoplasm. Associates with the EF-Tu.GDP complex and induces the exchange of GDP to GTP. It remains bound to the aminoacyl-tRNA.EF-Tu.GTP complex up to the GTP hydrolysis stage on the ribosome. This chain is Elongation factor Ts, found in Herpetosiphon aurantiacus (strain ATCC 23779 / DSM 785 / 114-95).